The following is a 115-amino-acid chain: Histidine decarboxylase proenzyme (115 aa).

Residue S83 is modified to Pyruvic acid (Ser).

As to quaternary structure, the proenzyme is a hexamer of identical pi chains; each pi chain monomer is cleaved to form a small (or beta) chain and a large (or alpha) chain by non-hydrolytic self-catalysis. It depends on pyruvate as a cofactor.

The catalysed reaction is L-histidine + H(+) = histamine + CO2. In Lentilactobacillus buchneri (Lactobacillus buchneri), this protein is Histidine decarboxylase proenzyme.